The following is a 251-amino-acid chain: DNA repair protein RecO (251 aa).

Belongs to the RecO family.

Its function is as follows. Involved in DNA repair and RecF pathway recombination. The protein is DNA repair protein RecO of Streptococcus mutans serotype c (strain ATCC 700610 / UA159).